A 145-amino-acid polypeptide reads, in one-letter code: Lipoprotein signal peptidase (145 aa).

Helical transmembrane passes span 57–77 and 79–99; these read LFFI…MIKL and ENSL…GNLI. Residues Asp109 and Asp124 contribute to the active site. A helical transmembrane segment spans residues 120-140; that stretch reads FNVADSFIVVGAIILGYLMIF.

It belongs to the peptidase A8 family.

Its subcellular location is the cell membrane. The catalysed reaction is Release of signal peptides from bacterial membrane prolipoproteins. Hydrolyzes -Xaa-Yaa-Zaa-|-(S,diacylglyceryl)Cys-, in which Xaa is hydrophobic (preferably Leu), and Yaa (Ala or Ser) and Zaa (Gly or Ala) have small, neutral side chains.. The protein operates within protein modification; lipoprotein biosynthesis (signal peptide cleavage). This protein specifically catalyzes the removal of signal peptides from prolipoproteins. The chain is Lipoprotein signal peptidase from Caldanaerobacter subterraneus subsp. tengcongensis (strain DSM 15242 / JCM 11007 / NBRC 100824 / MB4) (Thermoanaerobacter tengcongensis).